Here is a 124-residue protein sequence, read N- to C-terminus: uncharacterized protein (124 aa).

Functionally, not required for the biogenesis of c-type cytochromes. This is an uncharacterized protein from Rhodobacter capsulatus (strain ATCC BAA-309 / NBRC 16581 / SB1003).